A 460-amino-acid polypeptide reads, in one-letter code: 3-isopropylmalate dehydratase large subunit (460 aa).

C338, C398, and C401 together coordinate [4Fe-4S] cluster.

It belongs to the aconitase/IPM isomerase family. LeuC type 1 subfamily. Heterodimer of LeuC and LeuD. It depends on [4Fe-4S] cluster as a cofactor.

The enzyme catalyses (2R,3S)-3-isopropylmalate = (2S)-2-isopropylmalate. It participates in amino-acid biosynthesis; L-leucine biosynthesis; L-leucine from 3-methyl-2-oxobutanoate: step 2/4. Its function is as follows. Catalyzes the isomerization between 2-isopropylmalate and 3-isopropylmalate, via the formation of 2-isopropylmaleate. The polypeptide is 3-isopropylmalate dehydratase large subunit (Streptococcus thermophilus (strain CNRZ 1066)).